A 366-amino-acid polypeptide reads, in one-letter code: MMTAIGMMSGTSLDGVDVALIETDGERVTAFGPTGYRPYTNDERGLLREALAEAVNLTRRDARPGVIGMAEHAVTMAHSDAVTSFLARNGIRREDIDIVGFHGQTVLHRPGERLTVQIGDADALAKAIRVPVMHDFRAADVAAGGQGAPFVPAYHRALAQSLGRDGPICVVNIGGVSNVTYIDGADTLIACDTGPGNALLDDFMLRTTGEPFDRDGRLAQQGRPDADWIASALNHPFFALPPPKSLDRNDFASLALPDRPPADGAATLTAFTAAAIARIVPLLPKAPERWIVAGGGARNPIMLEMLREKVAPAPVERADALGWSIDAMEAQAFGYLAARGLKGLPLSYPATTGVPVPMTGGVVTRP.

An ATP-binding site is contributed by 10–17 (GTSLDGVD).

Belongs to the anhydro-N-acetylmuramic acid kinase family.

The catalysed reaction is 1,6-anhydro-N-acetyl-beta-muramate + ATP + H2O = N-acetyl-D-muramate 6-phosphate + ADP + H(+). It participates in amino-sugar metabolism; 1,6-anhydro-N-acetylmuramate degradation. Its pathway is cell wall biogenesis; peptidoglycan recycling. Functionally, catalyzes the specific phosphorylation of 1,6-anhydro-N-acetylmuramic acid (anhMurNAc) with the simultaneous cleavage of the 1,6-anhydro ring, generating MurNAc-6-P. Is required for the utilization of anhMurNAc either imported from the medium or derived from its own cell wall murein, and thus plays a role in cell wall recycling. This Nitrobacter winogradskyi (strain ATCC 25391 / DSM 10237 / CIP 104748 / NCIMB 11846 / Nb-255) protein is Anhydro-N-acetylmuramic acid kinase.